A 68-amino-acid polypeptide reads, in one-letter code: SERF-like protein YDL085C-A (68 aa).

Composition is skewed to basic and acidic residues over residues 1–43 (MARG…EILR) and 50–68 (DARREAEKLEKLKAEKTRR). The disordered stretch occupies residues 1–68 (MARGNQRDLA…EKLKAEKTRR (68 aa)). Serine 37 carries the phosphoserine modification.

Belongs to the SERF family.

It localises to the cytoplasm. Its subcellular location is the nucleus. In Saccharomyces cerevisiae (strain ATCC 204508 / S288c) (Baker's yeast), this protein is SERF-like protein YDL085C-A.